We begin with the raw amino-acid sequence, 282 residues long: Polyamine aminopropyltransferase (282 aa).

A PABS domain is found at 11–239; the sequence is IEWYPRGYGV…SPWSFLVGVK (229 aa). Q36 contacts S-methyl-5'-thioadenosine. Residues H67 and D91 each contribute to the spermidine site. Residues E111 and 142–143 contribute to the S-methyl-5'-thioadenosine site; that span reads DG. D160 functions as the Proton acceptor in the catalytic mechanism. A spermidine-binding site is contributed by 160 to 163; the sequence is DSTD. P167 is an S-methyl-5'-thioadenosine binding site.

It belongs to the spermidine/spermine synthase family. Homodimer or homotetramer.

It localises to the cytoplasm. The catalysed reaction is S-adenosyl 3-(methylsulfanyl)propylamine + putrescine = S-methyl-5'-thioadenosine + spermidine + H(+). The protein operates within amine and polyamine biosynthesis; spermidine biosynthesis; spermidine from putrescine: step 1/1. Catalyzes the irreversible transfer of a propylamine group from the amino donor S-adenosylmethioninamine (decarboxy-AdoMet) to putrescine (1,4-diaminobutane) to yield spermidine. This is Polyamine aminopropyltransferase from Thermococcus onnurineus (strain NA1).